A 132-amino-acid chain; its full sequence is Large ribosomal subunit protein bL12 (132 aa).

The span at 100-126 shows a compositional bias: basic and acidic residues; the sequence is ESTPKPVKEGASKEDAEAAKKELEEAG. Residues 100–132 form a disordered region; that stretch reads ESTPKPVKEGASKEDAEAAKKELEEAGAKVSIK.

Belongs to the bacterial ribosomal protein bL12 family. As to quaternary structure, homodimer. Part of the ribosomal stalk of the 50S ribosomal subunit. Forms a multimeric L10(L12)X complex, where L10 forms an elongated spine to which 2 to 4 L12 dimers bind in a sequential fashion. Binds GTP-bound translation factors.

Forms part of the ribosomal stalk which helps the ribosome interact with GTP-bound translation factors. Is thus essential for accurate translation. This chain is Large ribosomal subunit protein bL12, found in Thermosynechococcus vestitus (strain NIES-2133 / IAM M-273 / BP-1).